We begin with the raw amino-acid sequence, 501 residues long: Probable cytochrome P450 28d2 (501 aa).

Cys-446 contacts heme.

It belongs to the cytochrome P450 family. It depends on heme as a cofactor.

It localises to the endoplasmic reticulum membrane. The protein resides in the microsome membrane. May be involved in the metabolism of insect hormones and in the breakdown of synthetic insecticides. In Drosophila melanogaster (Fruit fly), this protein is Probable cytochrome P450 28d2 (Cyp28d2).